Here is a 449-residue protein sequence, read N- to C-terminus: Probable glycosyltransferase 5 (449 aa).

Over residues 1-14 the composition is skewed to basic and acidic residues; the sequence is MMEKHGGKVTSDRR. Residues 1–24 form a disordered region; it reads MMEKHGGKVTSDRRAGRRQHGQRC. Topologically, residues 1–28 are cytoplasmic; the sequence is MMEKHGGKVTSDRRAGRRQHGQRCSASD. A helical; Signal-anchor for type II membrane protein membrane pass occupies residues 29–49; that stretch reads AAPLVVVVILIVAALFLILGP. The Lumenal segment spans residues 50–449; it reads TGSSSFTVPR…HPTFRAARPT (400 aa). Residues 74 to 109 are disordered; sequence APPPPPPPAQMQAGANASSEEDSGLPPPRQLTDPPY. N-linked (GlcNAc...) asparagine glycans are attached at residues N89, N413, and N422.

This sequence belongs to the glycosyltransferase 34 family.

Its subcellular location is the golgi apparatus membrane. Functionally, probable glycosyltransferase that may be involved in the biosynthesis of xyloglucan. In Oryza sativa subsp. japonica (Rice), this protein is Probable glycosyltransferase 5.